Reading from the N-terminus, the 400-residue chain is CinA-like protein (400 aa).

Belongs to the CinA family.

The sequence is that of CinA-like protein from Escherichia coli O9:H4 (strain HS).